Reading from the N-terminus, the 77-residue chain is Defensin-like protein 161 (77 aa).

Positions 1–27 are cleaved as a signal peptide; the sequence is MAKLSCSYLLVFMLVFSAILMVEKVEG. Disulfide bonds link Cys30–Cys77, Cys40–Cys59, Cys45–Cys71, and Cys49–Cys73.

It belongs to the DEFL family.

Its subcellular location is the secreted. The polypeptide is Defensin-like protein 161 (LCR27) (Arabidopsis thaliana (Mouse-ear cress)).